Consider the following 280-residue polypeptide: Putative aquaporin-10 (280 aa).

The Cytoplasmic segment spans residues 1–8 (MEAVSSEY). A helical transmembrane segment spans residues 9-29 (YFPLYSALGYFALVFGIGEIA). The Extracellular segment spans residues 30 to 64 (RIITAKYVSPRGNSQLFLYELIGTIQMCTCVYENG). A helical membrane pass occupies residues 65–85 (IIFKNYGFPAIFICVALLLTA). Over 86–114 (GNIFNRGAMTNCAPIFEQFVFGNLGSSKF) the chain is Cytoplasmic. A helical membrane pass occupies residues 115–135 (LTILSAQLIGATFASKFAYLI). Over 136-164 (WNITAPYSTAHLENASNLECILHYKQTAG) the chain is Extracellular. A helical transmembrane segment spans residues 165–185 (IVIGFEIVGAFVVRIVVAQLL). At 186–193 (ARPALIKL) the chain is on the cytoplasmic side. Residues 194 to 214 (IPFAISAYLSLALYVVGVPGL) form a helical membrane-spanning segment. Residues 215 to 233 (NPIVATARLYGCRGIDNSS) lie on the Extracellular side of the membrane. The helical transmembrane segment at 234-254 (FFILYWFCPVLGWLTGAYVVG) threads the bilayer. The Cytoplasmic segment spans residues 255-280 (QKSPSKKSAKDVKAEKKAKAAAKKSD). The tract at residues 256–280 (KSPSKKSAKDVKAEKKAKAAAKKSD) is disordered. Residues 262–280 (SAKDVKAEKKAKAAAKKSD) show a composition bias toward basic and acidic residues.

It belongs to the MIP/aquaporin (TC 1.A.8) family.

It localises to the membrane. This Caenorhabditis elegans protein is Putative aquaporin-10 (aqp-10).